We begin with the raw amino-acid sequence, 57 residues long: Large ribosomal subunit protein bL33 (57 aa).

It belongs to the bacterial ribosomal protein bL33 family.

This Bifidobacterium longum (strain NCC 2705) protein is Large ribosomal subunit protein bL33.